The following is a 99-amino-acid chain: Cytochrome c-555 (99 aa).

Heme c is bound by residues cysteine 23, cysteine 26, histidine 27, and methionine 73.

In terms of processing, binds 1 heme c group covalently per subunit.

The protein is Cytochrome c-555 of Prosthecochloris aestuarii.